The chain runs to 396 residues: Phosphoglycerate kinase (396 aa).

Residues 19 to 21, Arg34, 57 to 60, Arg116, and Arg153 each bind substrate; these read DFN and HLGK. ATP is bound by residues Lys204, Glu324, and 351–354; that span reads GGDT.

It belongs to the phosphoglycerate kinase family. In terms of assembly, monomer.

The protein localises to the cytoplasm. The enzyme catalyses (2R)-3-phosphoglycerate + ATP = (2R)-3-phospho-glyceroyl phosphate + ADP. Its pathway is carbohydrate degradation; glycolysis; pyruvate from D-glyceraldehyde 3-phosphate: step 2/5. The polypeptide is Phosphoglycerate kinase (Maridesulfovibrio salexigens (strain ATCC 14822 / DSM 2638 / NCIMB 8403 / VKM B-1763) (Desulfovibrio salexigens)).